The sequence spans 176 residues: Japanin-like-RS (176 aa).

The N-terminal stretch at 1-24 (MKVLLCLVCSFYIIVSSITTMTTG) is a signal peptide. Intrachain disulfides connect Cys52/Cys174 and Cys138/Cys162. Asn155 carries N-linked (GlcNAc...) asparagine glycosylation.

This sequence belongs to the calycin superfamily. Lipocalin family. As to quaternary structure, homodimer; non-disulfide-linked. Each monomer accommodates one molecule of cholesterol in a pocket. Expressed in salivary glands.

It localises to the secreted. In terms of biological role, salivary tick protein that modulates host immune response. This protein blocks dendritic cell (DC) differentiation from monocytes. In addition, it inhibits up-regulation of costimulatory molecules and pro-inflammatory cytokines in response to stimuli and promotes up-regulation of co-inhibitory molecules and the anti-inflammatory cytokine interleukin-10. It has a pocket to accomodate cholesterol, which may have immune-modulatory roles, either directly or through interactions with the host gut microbiota. The polypeptide is Japanin-like-RS (Rhipicephalus sanguineus (Brown dog tick)).